Consider the following 188-residue polypeptide: Abscisic acid receptor PYL8 (188 aa).

An START-like region spans residues 25–176 (HELVDNQCSS…NLKSLADISE (152 aa)). A disulfide bond links Cys32 and Cys157. Lys61 contacts abscisate. A Phosphothreonine; by CARK1 modification is found at Thr77. The Gate loop motif lies at 85–89 (SGLPA). Residues 89-94 (ATRSTE), 116-122 (RLKNYSS), and Glu141 each bind abscisate. Positions 115 to 117 (HRL) match the Latch loop motif.

The protein belongs to the PYR/PYL/RCAR abscisic acid intracellular receptor family. Monomer. Homodimer. Binds ABA on one subunit only. interacts with ABI1 and HAB1, and possibly with other PP2Cs. Binds to CARs protein in an ABA-independent manner, both at the plasma membrane and in the nucleus. Interacts directly with CAR1 and CAR4. Interacts with MYB44, MYB73 and MYB77 in an ABA-independent manner. Interacts with DDA1. Interacts with CARK1 in the cytosol. Binds to ABI1 when phosphorylated by CARK1. Interacts with AIP1 in the nucleus. Phosphorylated by CARK1 especially in response to abscisic acid (ABA); this phosphorylation promotes its stability and inhibitory ability to ABI1. Post-translationally, ubiquitinated in DDA1- and CDD complex-dependent manner. Ubiquitination leads to its subsequent proteasomal degradation.

It localises to the cytoplasm. The protein localises to the cytosol. It is found in the nucleus. The protein resides in the cell membrane. Functionally, receptor for abscisic acid (ABA) required for ABA-mediated responses such as stomatal closure and germination inhibition. Inhibits the activity of group-A protein phosphatases type 2C (PP2Cs) in an ABA-independent manner but more efficiently when activated by ABA. Confers enhanced sensitivity to ABA. Can be activated by both (-)-ABA and (+)-ABA. Mediates crosstalk between ABA and auxin signaling to regulate lateral root growth. Required for lateral root growth suppression by ABA. In response to auxin, promotes lateral root growth by enhancing MYB77-dependent transcription of the auxin-responsive gene IAA19. Enhances the abilities of MYB44 and MYB73 to activate IAA19 gene. The polypeptide is Abscisic acid receptor PYL8 (Arabidopsis thaliana (Mouse-ear cress)).